The following is a 241-amino-acid chain: Uracil-DNA glycosylase (241 aa).

Residue Asp-68 is the Proton acceptor of the active site.

This sequence belongs to the uracil-DNA glycosylase (UDG) superfamily. UNG family.

Its subcellular location is the cytoplasm. The enzyme catalyses Hydrolyzes single-stranded DNA or mismatched double-stranded DNA and polynucleotides, releasing free uracil.. Its function is as follows. Excises uracil residues from the DNA which can arise as a result of misincorporation of dUMP residues by DNA polymerase or due to deamination of cytosine. The chain is Uracil-DNA glycosylase from Rhizobium meliloti (strain 1021) (Ensifer meliloti).